A 100-amino-acid polypeptide reads, in one-letter code: UPF0235 protein NE0395 (100 aa).

It belongs to the UPF0235 family.

This Nitrosomonas europaea (strain ATCC 19718 / CIP 103999 / KCTC 2705 / NBRC 14298) protein is UPF0235 protein NE0395.